The primary structure comprises 139 residues: Putative pre-16S rRNA nuclease (139 aa).

It belongs to the YqgF nuclease family.

It localises to the cytoplasm. In terms of biological role, could be a nuclease involved in processing of the 5'-end of pre-16S rRNA. This is Putative pre-16S rRNA nuclease from Streptococcus suis (strain 98HAH33).